The chain runs to 768 residues: MTAPFTPAEIAAEGIKPEEYEDIVQRLGRHPNKAELGMFGVMWSEHCCYKNSRPLLSNFPTEGERILVGPGENAGVVDLGDGLRLAFKIESHNHPSAVEPFQGAATGVGGILRDIFTMGARPIAILNSLRFGNLDDARNRRIFTGVVDGISHYGNCVGVPTVGGEIYFDPAYSGNPLVNAMALGLMETEEIVKAGASGIGNPVLYVGSTTGRDGMGGASFASAELTDQSMDDRPAVQVGDPFLEKSLIEACLEAFKSGAVVAAQDMGAAGITCSTAEMAAKGGVGIELDLDKIPVRETGMVPYEYLLSESQERMLFVAQPGREQELIDIFHRWGLQAVVAGQVIADPIVRIFFQGGIAAEIPATALADNTPIYHRQLLDQAPDYAQQAWQWQESDLSPAAIAGIEIAGQKQSWNEVLLTLLDSPTIASKHWVYRQYDHQVQNNTVIVPGGADAAVVRVRPLDAKPEECVIGVAATTDCNARYVYLNPLEGAKAAVAEAARNLSCVGAEPLAVTDNLNFGSPENPVGYWQLALACEGIAEGCRQLNTPVTGGNVSLYNETLDSNGRPQPIYPTPVIGMVGRVENINKVVGQGWRNSGNGIYLLGSNDGNTLGGSEYLAVVHHTVAGQPPQVDFDLEKAVQKACRHGIAQGWVNAAHDCAEGGLSVALAEMAIASQLGAEINLPDSDQRLDNLLFGESASRIVVAVAPEHQPAWENYLAGQSLPWQKLGVVGTAQGNLTFIDAQNNALIDLPVSALTEPWQTAIARRLKS.

His46 is an active-site residue. Residues Tyr49 and Lys88 each coordinate ATP. Glu90 lines the Mg(2+) pocket. Substrate-binding positions include 91-94 (SHNH) and Arg113. His92 serves as the catalytic Proton acceptor. Mg(2+) is bound at residue Asp114. Substrate is bound at residue Gln237. Asp265 serves as a coordination point for Mg(2+). 309-311 (ESQ) lines the substrate pocket. The ATP site is built by Asp514 and Gly551. Mg(2+) is bound at residue Asn552. Ser554 lines the substrate pocket.

This sequence belongs to the FGAMS family. As to quaternary structure, monomer. Part of the FGAM synthase complex composed of 1 PurL, 1 PurQ and 2 PurS subunits.

The protein resides in the cytoplasm. The enzyme catalyses N(2)-formyl-N(1)-(5-phospho-beta-D-ribosyl)glycinamide + L-glutamine + ATP + H2O = 2-formamido-N(1)-(5-O-phospho-beta-D-ribosyl)acetamidine + L-glutamate + ADP + phosphate + H(+). The protein operates within purine metabolism; IMP biosynthesis via de novo pathway; 5-amino-1-(5-phospho-D-ribosyl)imidazole from N(2)-formyl-N(1)-(5-phospho-D-ribosyl)glycinamide: step 1/2. Part of the phosphoribosylformylglycinamidine synthase complex involved in the purines biosynthetic pathway. Catalyzes the ATP-dependent conversion of formylglycinamide ribonucleotide (FGAR) and glutamine to yield formylglycinamidine ribonucleotide (FGAM) and glutamate. The FGAM synthase complex is composed of three subunits. PurQ produces an ammonia molecule by converting glutamine to glutamate. PurL transfers the ammonia molecule to FGAR to form FGAM in an ATP-dependent manner. PurS interacts with PurQ and PurL and is thought to assist in the transfer of the ammonia molecule from PurQ to PurL. The polypeptide is Phosphoribosylformylglycinamidine synthase subunit PurL (Synechocystis sp. (strain ATCC 27184 / PCC 6803 / Kazusa)).